The primary structure comprises 260 residues: Acetylglutamate kinase (260 aa).

Substrate is bound by residues 41-42 (GG), Arg-63, and Asn-157.

Belongs to the acetylglutamate kinase family. ArgB subfamily.

The protein localises to the cytoplasm. The enzyme catalyses N-acetyl-L-glutamate + ATP = N-acetyl-L-glutamyl 5-phosphate + ADP. Its pathway is amino-acid biosynthesis; L-arginine biosynthesis; N(2)-acetyl-L-ornithine from L-glutamate: step 2/4. Its function is as follows. Catalyzes the ATP-dependent phosphorylation of N-acetyl-L-glutamate. The polypeptide is Acetylglutamate kinase (Acidobacterium capsulatum (strain ATCC 51196 / DSM 11244 / BCRC 80197 / JCM 7670 / NBRC 15755 / NCIMB 13165 / 161)).